The primary structure comprises 298 residues: Tyrosine recombinase XerC (298 aa).

Positions 1 to 84 (MNHIQEAFLN…TLRTFYEYWM (84 aa)) constitute a Core-binding (CB) domain. In terms of domain architecture, Tyr recombinase spans 105-286 (YLPQFFYEEE…SNQQLRKVYL (182 aa)). Catalysis depends on residues R145, K169, H238, R241, and H264. Y273 acts as the O-(3'-phospho-DNA)-tyrosine intermediate in catalysis.

The protein belongs to the 'phage' integrase family. XerC subfamily. In terms of assembly, forms a cyclic heterotetrameric complex composed of two molecules of XerC and two molecules of XerD.

The protein resides in the cytoplasm. Its function is as follows. Site-specific tyrosine recombinase, which acts by catalyzing the cutting and rejoining of the recombining DNA molecules. The XerC-XerD complex is essential to convert dimers of the bacterial chromosome into monomers to permit their segregation at cell division. It also contributes to the segregational stability of plasmids. In Staphylococcus aureus (strain bovine RF122 / ET3-1), this protein is Tyrosine recombinase XerC.